Reading from the N-terminus, the 121-residue chain is Small ribosomal subunit protein uS12c (121 aa).

Belongs to the universal ribosomal protein uS12 family. Part of the 30S ribosomal subunit.

The protein resides in the plastid. Its subcellular location is the chloroplast. With S4 and S5 plays an important role in translational accuracy. Located at the interface of the 30S and 50S subunits. In Bigelowiella natans (Pedinomonas minutissima), this protein is Small ribosomal subunit protein uS12c (rps12).